A 288-amino-acid polypeptide reads, in one-letter code: uncharacterized protein (288 aa).

This is an uncharacterized protein from Mycobacterium tuberculosis (strain CDC 1551 / Oshkosh).